The chain runs to 235 residues: Sugar fermentation stimulation protein homolog (235 aa).

Belongs to the SfsA family.

This chain is Sugar fermentation stimulation protein homolog, found in Roseobacter denitrificans (strain ATCC 33942 / OCh 114) (Erythrobacter sp. (strain OCh 114)).